The primary structure comprises 153 residues: Arginine repressor (153 aa).

This sequence belongs to the ArgR family.

Its subcellular location is the cytoplasm. It participates in amino-acid biosynthesis; L-arginine biosynthesis [regulation]. Functionally, regulates arginine biosynthesis genes. The sequence is that of Arginine repressor from Glaesserella parasuis serovar 5 (strain SH0165) (Haemophilus parasuis).